The following is a 379-amino-acid chain: Protein FAM53B (379 aa).

Disordered stretches follow at residues 206 to 257 (CPAE…HKQR) and 302 to 348 (AQND…AGKE). A compositionally biased stretch (polar residues) spans 212–236 (SPESTPELQRRSGQSGLARSRSQPC). Residues 239–249 (NHQKIGVKRRR) show a composition bias toward basic residues. The short motif at 246 to 249 (KRRR) is the Nuclear localization signal element. Residues 326–342 (QSDSSSADALIHQSESS) show a composition bias toward polar residues.

It belongs to the FAM53 family. Interacts with ctnnb1. Mainly expressed in proliferating tissues.

The protein resides in the nucleus. In terms of biological role, acts as a regulator of Wnt signaling pathway by regulating beta-catenin (ctnnb1) nuclear localization. Required for appendage regeneration by regulating cell proliferation. This is Protein FAM53B from Danio rerio (Zebrafish).